A 265-amino-acid polypeptide reads, in one-letter code: MVELKEPLATLWRGKDAFAEVKKLNGEVFRELETRRTLRFELSGKSYFLKWHKGTTLKEIIKNLLSLRMPVLGADREWHAIHRLSDVGVDTMKGIGFGEKGLNPLTRASFIITEDLTPTISLEDYCADWAVNPPDIRVKRMLIARVATMVRKMHTAGINHRDCYICHFLLHLPFTGREDELKISVIDLHRAQIRAKVPRRWRDKDLIGLYFSSMNIGLTQRDIWRFMKVYFGMPLRKILSLEQNLLNMASVKAERIKERTQRKGL.

Aspartate 162 is an active-site residue.

The protein belongs to the protein kinase superfamily. KdkA/RfaP family. It depends on Mg(2+) as a cofactor.

The enzyme catalyses an L-alpha-D-Hep-(1-&gt;3)-L-alpha-D-Hep-(1-&gt;5)-[alpha-Kdo-(2-&gt;4)]-alpha-Kdo-(2-&gt;6)-lipid A + ATP = an L-alpha-D-Hep-(1-&gt;3)-4-O-phospho-L-alpha-D-Hep-(1-&gt;5)-[alpha-Kdo-(2-&gt;4)]-alpha-Kdo-(2-&gt;6)-lipid A + ADP + H(+). It catalyses the reaction L-alpha-D-Hep-(1-&gt;3)-L-alpha-D-Hep-(1-&gt;5)-[alpha-Kdo-(2-&gt;4)]-alpha-Kdo-(2-&gt;6)-lipid A (E. coli) + ATP = L-alpha-D-Hep-(1-&gt;3)-4-O-phospho-L-alpha-D-Hep-(1-&gt;5)-[alpha-Kdo-(2-&gt;4)]-alpha-Kdo-(2-&gt;6)-lipid A (E. coli) + ADP + H(+). It functions in the pathway bacterial outer membrane biogenesis; LPS core biosynthesis. Functionally, kinase involved in the biosynthesis of the core oligosaccharide region of lipopolysaccharide (LPS). Catalyzes the phosphorylation of heptose I (HepI), the first heptose added to the Kdo2-lipid A module. This is Lipopolysaccharide core heptose(I) kinase WaaP from Escherichia coli (strain K12).